A 511-amino-acid polypeptide reads, in one-letter code: Maturase K (511 aa).

This sequence belongs to the intron maturase 2 family. MatK subfamily.

The protein localises to the plastid. Its subcellular location is the chloroplast. Usually encoded in the trnK tRNA gene intron. Probably assists in splicing its own and other chloroplast group II introns. The sequence is that of Maturase K from Brachypodium sylvaticum (False brome).